The primary structure comprises 271 residues: (+)-cis,trans-nepetalactol synthase NEPS1 (271 aa).

Residues 24-30, 49-51, 72-73, and asparagine 99 contribute to the NAD(+) site; these read GGASGIG, DIQ, and DV. Residues threonine 154 and tyrosine 167 each contribute to the substrate site. Residues tyrosine 167, lysine 171, and 200–205 contribute to the NAD(+) site; that span reads VLTPLA. Tyrosine 167 acts as the Proton acceptor in catalysis.

The protein belongs to the short-chain dehydrogenases/reductases (SDR) family.

The catalysed reaction is (S)-8-oxocitronellyl enol = cis-trans-nepetalactol. The enzyme catalyses cis-cis-nepetalactol + NAD(+) = cis-cis-nepetalactone + NADH + H(+). It catalyses the reaction cis-trans-nepetalactol + NAD(+) = cis-trans-nepetalactone + NADH + H(+). Bifunctional enzyme that possesses cyclase and dehydrogenase activities. Functions as a non-oxidoreductive cyclase to promote the formation of cis-trans-nepetalactol. Functions as dehydrogenase to oxidize cis-cis-nepetalactol and cis-trans-nepetalactol into nepetalactones, metabolites that are both insect-repellent and have euphoric effect in cats. Binds NAD(+) as classical short-chain dehydrogenase/reductase (SDR), but does not utilize it for its redox-neutral cyclase activity. The sequence is that of (+)-cis,trans-nepetalactol synthase NEPS1 from Nepeta racemosa (Catmint).